A 413-amino-acid polypeptide reads, in one-letter code: Mitochondrial carrier protein MTM1 (413 aa).

Solcar repeat units follow at residues 59 to 193 (IGFT…FRNR), 205 to 305 (MTFC…IKKR), and 318 to 406 (GVFG…VKYV). 6 helical membrane-spanning segments follow: residues 65–85 (VFSA…LDVV), 170–190 (NAGL…YDMF), 204–226 (AMTF…TVCY), 284–304 (QLAR…PIKK), 316–336 (LVGV…IAAA), and 378–399 (LFMG…VVSF).

The protein belongs to the mitochondrial carrier (TC 2.A.29) family. In terms of tissue distribution, ubiquitous.

The protein localises to the mitochondrion inner membrane. Involved in the mitochondrial activation of MSD1 by specifically facilitating insertion of the essential manganese cofactor. Has the ability to activate iron regulon in an iron-dependent manner. In Arabidopsis thaliana (Mouse-ear cress), this protein is Mitochondrial carrier protein MTM1 (MTM1).